The chain runs to 105 residues: Small ribosomal subunit protein uS10 (105 aa).

Belongs to the universal ribosomal protein uS10 family. As to quaternary structure, part of the 30S ribosomal subunit.

Functionally, involved in the binding of tRNA to the ribosomes. The chain is Small ribosomal subunit protein uS10 from Nitratidesulfovibrio vulgaris (strain DSM 19637 / Miyazaki F) (Desulfovibrio vulgaris).